The chain runs to 84 residues: uncharacterized protein (84 aa).

The segment at cysteine 8 to cysteine 47 is cysteine motif.

This is an uncharacterized protein from Rhizobium meliloti (strain 1021) (Ensifer meliloti).